Here is a 124-residue protein sequence, read N- to C-terminus: Small ribosomal subunit protein uS11 (124 aa).

This sequence belongs to the universal ribosomal protein uS11 family. As to quaternary structure, part of the 30S ribosomal subunit.

Its function is as follows. Located on the platform of the 30S subunit. The chain is Small ribosomal subunit protein uS11 from Methanococcus aeolicus (strain ATCC BAA-1280 / DSM 17508 / OCM 812 / Nankai-3).